The following is a 330-amino-acid chain: MSQWHHPRSGWGRRRDFSGRSSAKKKGGNHIPERWKDYLPVGQRMPGTRFIAFKVPLQKSFEKKLAPEECFSPLDLFNKIREQNEELGLIIDLTYTQRYYKPEDLPETVPYLKIFTVGHQVPDDETIFKFKHAVNGFLKENKDNDKLIGVHCTHGLNRTGYLICRYLIDVEGVRPDDAIELFNRCRGHCLERQNYIEDLQNGPIRKNWNSSVPRSSDFEDSAHLMQPVHNKPVKQGPRYNLHQIQGHSAPRHFHTQTQSLQQSVRKFSENPHVYQRHHLPPPGPPGEDYSHRRYSWNVKPNASRAAQDRRRWYPYNYSRLSYPACWEWTQ.

A compositionally biased stretch (basic residues) spans 1–12; that stretch reads MSQWHHPRSGWG. The interval 1 to 32 is disordered; sequence MSQWHHPRSGWGRRRDFSGRSSAKKKGGNHIP. The Tyrosine-protein phosphatase domain maps to 61–208; the sequence is FEKKLAPEEC…LQNGPIRKNW (148 aa). Cysteine 152 functions as the Phosphocysteine intermediate in the catalytic mechanism. Substrate is bound at residue 153 to 158; the sequence is THGLNR. Catalysis depends on arginine 158, which acts as the Proton donor/acceptor.

The protein belongs to the protein-tyrosine phosphatase family. Non-receptor class dual specificity subfamily. Monomer. May interact with SFRS7 and SFRS9/SRP30C.

Its subcellular location is the nucleus. The protein resides in the nucleus speckle. Functionally, possesses RNA 5'-triphosphatase and diphosphatase activities, but displays a poor protein-tyrosine phosphatase activity. In addition, has phosphatase activity with ATP, ADP and O-methylfluorescein phosphate (in vitro). Binds to RNA. May participate in nuclear mRNA metabolism. In Homo sapiens (Human), this protein is RNA/RNP complex-1-interacting phosphatase.